Here is a 208-residue protein sequence, read N- to C-terminus: Uracil phosphoribosyltransferase (208 aa).

5-phospho-alpha-D-ribose 1-diphosphate contacts are provided by residues Arg78, Arg103, and Asp130 to Ser138. Uracil contacts are provided by residues Ile193 and Gly198–Ala200. Position 199 (Asp199) interacts with 5-phospho-alpha-D-ribose 1-diphosphate.

This sequence belongs to the UPRTase family. It depends on Mg(2+) as a cofactor.

It catalyses the reaction UMP + diphosphate = 5-phospho-alpha-D-ribose 1-diphosphate + uracil. It participates in pyrimidine metabolism; UMP biosynthesis via salvage pathway; UMP from uracil: step 1/1. Allosterically activated by GTP. Its function is as follows. Catalyzes the conversion of uracil and 5-phospho-alpha-D-ribose 1-diphosphate (PRPP) to UMP and diphosphate. The polypeptide is Uracil phosphoribosyltransferase (Brucella anthropi (strain ATCC 49188 / DSM 6882 / CCUG 24695 / JCM 21032 / LMG 3331 / NBRC 15819 / NCTC 12168 / Alc 37) (Ochrobactrum anthropi)).